The sequence spans 566 residues: MTTREYDYIICGAGSAGNVLATRLTEDPDVTVLLLEAGGPDYRFDFRTQMPAALAYPLQGRRYNWAYETDPEPHMDNRRMECGRGKGLGGSSLINGMCYIRGNALDYDNWSTHKGLENWTYLDCLPYFKKAETRDVGPNDYHGGSGPVSVTTSKPGVNPLFEAMVDAGVQAGYPRTDDLNGYQQEGFGPMDRTVTPKGRRASTARGYLDQAKVRPNLEIVTHALADRILFDGKRASGVTYLRGSERATAHARREVLVCSGAIASPQLLQRSGVGPGAWLKELDIPVVLDLPGVGQNLQDHLEMYIQYECKEPVSLYPALKWWNQPKIGLEWMLNGTGLGASNHFEAGGFIRTRDDDPWPNIQYHFLPVAINYNGSNAIEMHGFQAHVGSMRSPSRGRVKLRSRDPNDHPSILFNYMAEALDWREFRDAIRATREIMRQPALDRYRGRELNPGADCKSDKELDAFVRARAETAFHPSCSCKMGYDDMAVVDEEGRVHGLDGLRVVDASIMPIITTGNLNAPTIMIAEKIADKIRGRQPLARVDVPYFVANGAPARNVAKAVRQPETV.

FAD is bound at residue 7–36 (DYIICGAGSAGNVLATRLTEDPDVTVLLLE). Residues 180–202 (NGYQQEGFGPMDRTVTPKGRRAS) are disordered. His474 functions as the Proton acceptor in the catalytic mechanism.

This sequence belongs to the GMC oxidoreductase family. FAD serves as cofactor.

It carries out the reaction choline + A = betaine aldehyde + AH2. The enzyme catalyses betaine aldehyde + NAD(+) + H2O = glycine betaine + NADH + 2 H(+). It functions in the pathway amine and polyamine biosynthesis; betaine biosynthesis via choline pathway; betaine aldehyde from choline (cytochrome c reductase route): step 1/1. Functionally, involved in the biosynthesis of the osmoprotectant glycine betaine. Catalyzes the oxidation of choline to betaine aldehyde and betaine aldehyde to glycine betaine at the same rate. In Burkholderia orbicola (strain MC0-3), this protein is Oxygen-dependent choline dehydrogenase.